The following is a 122-amino-acid chain: Small ribosomal subunit protein uS13 (122 aa).

Residues 95–122 (GLPVRGQRTKTNSRTRKGRRKTVANKKK) form a disordered region. Basic residues predominate over residues 101–122 (QRTKTNSRTRKGRRKTVANKKK).

This sequence belongs to the universal ribosomal protein uS13 family. Part of the 30S ribosomal subunit. Forms a loose heterodimer with protein S19. Forms two bridges to the 50S subunit in the 70S ribosome.

In terms of biological role, located at the top of the head of the 30S subunit, it contacts several helices of the 16S rRNA. In the 70S ribosome it contacts the 23S rRNA (bridge B1a) and protein L5 of the 50S subunit (bridge B1b), connecting the 2 subunits; these bridges are implicated in subunit movement. Contacts the tRNAs in the A and P-sites. This Protochlamydia amoebophila (strain UWE25) protein is Small ribosomal subunit protein uS13.